Consider the following 217-residue polypeptide: Protein GrpE (217 aa).

This sequence belongs to the GrpE family. Homodimer.

The protein resides in the cytoplasm. Participates actively in the response to hyperosmotic and heat shock by preventing the aggregation of stress-denatured proteins, in association with DnaK and GrpE. It is the nucleotide exchange factor for DnaK and may function as a thermosensor. Unfolded proteins bind initially to DnaJ; upon interaction with the DnaJ-bound protein, DnaK hydrolyzes its bound ATP, resulting in the formation of a stable complex. GrpE releases ADP from DnaK; ATP binding to DnaK triggers the release of the substrate protein, thus completing the reaction cycle. Several rounds of ATP-dependent interactions between DnaJ, DnaK and GrpE are required for fully efficient folding. This chain is Protein GrpE, found in Mycoplasma genitalium (strain ATCC 33530 / DSM 19775 / NCTC 10195 / G37) (Mycoplasmoides genitalium).